The primary structure comprises 340 residues: Annexin A2-B (340 aa).

The interval 2–25 (ALIHEILGKLSLEGNQSSSRQSKL) is P10 binding site. Ser-27 carries the phosphoserine; by PKC modification. Annexin repeat units follow at residues 34-105 (FDAE…GLIK), 106-177 (TRPQ…ALAK), 190-262 (EKID…NLVQ), and 266-337 (NKPL…NLCG).

This sequence belongs to the annexin family. In terms of assembly, tetramer of 2 light chains (p10 proteins) and 2 heavy chains (p36 proteins). In terms of tissue distribution, adult brain, heart, striated muscle, liver, kidney, and very high levels in skin.

It is found in the secreted. The protein resides in the extracellular space. Its subcellular location is the extracellular matrix. It localises to the basement membrane. In terms of biological role, calcium-regulated membrane-binding protein whose affinity for calcium is greatly enhanced by anionic phospholipids. It binds two calcium ions with high affinity. This is Annexin A2-B (anxa2-b) from Xenopus laevis (African clawed frog).